The following is a 115-amino-acid chain: Probable prefoldin subunit 1 (115 aa).

Belongs to the prefoldin subunit beta family. As to quaternary structure, heterohexamer of two PFD-alpha type and four PFD-beta type subunits.

Its function is as follows. Binds specifically to cytosolic chaperonin (c-CPN) and transfers target proteins to it. Binds to nascent polypeptide chain and promotes folding in an environment in which there are many competing pathways for nonnative proteins. This chain is Probable prefoldin subunit 1 (pfdn1), found in Dictyostelium discoideum (Social amoeba).